Reading from the N-terminus, the 496-residue chain is Glutamyl-tRNA(Gln) amidotransferase subunit B, organellar chromatophore (496 aa).

Belongs to the GatB/GatE family. GatB subfamily. In terms of assembly, subunit of the heterotrimeric GatCAB amidotransferase (AdT) complex, composed of A, B and C subunits.

It localises to the plastid. It is found in the organellar chromatophore. The enzyme catalyses L-glutamyl-tRNA(Gln) + L-glutamine + ATP + H2O = L-glutaminyl-tRNA(Gln) + L-glutamate + ADP + phosphate + H(+). Functionally, allows the formation of correctly charged Gln-tRNA(Gln) through the transamidation of misacylated Glu-tRNA(Gln). The reaction takes place in the presence of glutamine and ATP through an activated gamma-phospho-Glu-tRNA(Gln). This Paulinella chromatophora protein is Glutamyl-tRNA(Gln) amidotransferase subunit B, organellar chromatophore.